Consider the following 948-residue polypeptide: MKNKIILLWLLLIVILCTISNVKGCGMTTHNTVARRAYNFSSFDGFEQYQKYVSENFDVFDAGAAFPDFGYDCGGLANESEAAHWPPFLRAATKYLLETYPQPWSLDGIRLAVFLLGVTSHQIADISWHSIGGIQQGLIRAMAGQDFNGTYELAHGNADEGGEFELAYNYDLSWLSDKWYVPITDIKNIFHSMNYPRVDDENLLRCNAILYAGAMGVKIGGRFFYPEIAKKSPFLVDHYQDYFIGGLDDMSIWTSYCWPVLMGWMDGEDIGDFCFIQPDPNNDDDNQHLRLHHKHSILKNGSKIKEALSKSILNEMKITNNGKGVTFSLPNSMEKAINQVLNKFNQNPIGTLLEKYLPNLFNNKNKFYQENENEQYNHDEEELNIIDIDIDIEEEEQEEEEDKPIRMLSKNNNFKNYEYLNDKKKSSSSKLKNKSKKNIIKLNSDSNDLGTNFTTIYGQNMYSYFGKDIRSKDLNGDGFDDLIISSPGFGVPGSMQTGCVYYIISNGSSVTIDGGSGFTSEFDIDQVATGKLCGNETHAKFGWNIDVLDFNLDGIFDIIIGAPSSSNANLQYLGMIYIYLGEKNNPAGEWSTESDLPSITIQGIEYADTIGTVLRVADCNADSNADLILGSPHSAGGGTQRGTVQIFYSSKKRISGIPISLNDADYYGHGEVDYEWFGYEIKVAGQGDSSTLLVGSPNYHDEETAIVNIGKITSFPYNVNLNSFDLNPKFVMVGVNKNDKLGYSYNMVNGSLFGLDNVNDIMVLSLPTRGFGDDFDQVGEVVLIDIDNLSGFVEIKNVNLLLSIKGTTKYSRFGESLLIGKLESTDEFARLFVGAPLWTDSIDTGPGCVFTFLPNQHLTNDPAVLKQNIINNTPVVIYDSTHSIKTFRIDDDSGSSGGRSFNNKRKDSRFGFRILLSDFNNDGKNDLIVSADRDSSKILEGGSINIFQ.

Residues 1–24 (MKNKIILLWLLLIVILCTISNVKG) form the signal peptide. Asparagine 39, asparagine 78, asparagine 148, asparagine 300, asparagine 433, asparagine 452, asparagine 506, and asparagine 535 each carry an N-linked (GlcNAc...) asparagine glycan. FG-GAP repeat units lie at residues 451 to 512 (TNFT…SVTI), 526 to 588 (QVAT…NPAG), 596 to 656 (LPSI…RISG), and 663 to 724 (DADY…LNSF). N-linked (GlcNAc...) asparagine glycans are attached at residues asparagine 749 and asparagine 788. 2 FG-GAP repeats span residues 799 to 861 (NLLL…LTND) and 895 to 948 (SSGG…NIFQ).

This sequence belongs to the GPLD1 family. The cofactor is Ca(2+).

It localises to the secreted. It carries out the reaction a 6-(alpha-D-glucosaminyl)-1-(1,2-diacyl-sn-glycero-3-phospho)-1D-myo-inositol + H2O = 6-(alpha-D-glucosaminyl)-1D-myo-inositol + a 1,2-diacyl-sn-glycero-3-phosphate + H(+). Hydrolyzes the inositol phosphate linkage in proteins anchored by phosphatidylinositol glycans (GPI-anchor) thus releasing these proteins from the membrane. May also cleave GPI anchor intermediates intracellularly. The protein is Phosphatidylinositol-glycan-specific phospholipase D (pldG) of Dictyostelium discoideum (Social amoeba).